A 70-amino-acid polypeptide reads, in one-letter code: MKKDIHPKYEEITASCSCGNVMKIRSTVGHDLNLDVCSKCHPFFTGKQRDVATGGRVDRFNKRFNIPGSK.

Position 8 is an N6-acetyllysine (Lys8). Zn(2+)-binding residues include Cys16, Cys18, Cys37, and Cys40.

The protein belongs to the bacterial ribosomal protein bL31 family. Type A subfamily. Part of the 50S ribosomal subunit. Zn(2+) serves as cofactor.

Functionally, binds the 23S rRNA. The protein is Large ribosomal subunit protein bL31 of Escherichia coli O6:K15:H31 (strain 536 / UPEC).